The following is a 399-amino-acid chain: F-box protein At1g10110 (399 aa).

The region spanning 9–56 is the F-box domain; sequence PNWSELVTDILSLVFKHLSFTDFARAKTVCSSWYFASKSSSPRKNHTP.

In Arabidopsis thaliana (Mouse-ear cress), this protein is F-box protein At1g10110.